The primary structure comprises 1098 residues: Protein diaphanous homolog 2 (1098 aa).

Met-1 is subject to N-acetylmethionine. Positions 1 to 62 are disordered; sequence MEELGAAASG…SFRKSATKRE (62 aa). The span at 36-52 shows a compositional bias: basic and acidic residues; the sequence is ANEEETRNKPKLRDRIT. In terms of domain architecture, GBD/FH3 spans 90–463; it reads SLILSEKEVL…QIVLHCSGMD (374 aa). Coiled-coil stretches lie at residues 375 to 416 and 490 to 539; these read QLRV…NMLK and EENE…GQGV. Disordered regions lie at residues 537-565, 578-611, 679-699, 1007-1047, and 1063-1098; these read QGVP…PPPP, PPPP…GVFP, MKGQ…PKKK, HKRK…NKEG, and GAAF…MSSK. 2 stretches are compositionally biased toward pro residues: residues 543–565 and 578–608; these read IPGP…PPPP and PPPP…PPGG. An FH1 domain is found at 544–620; the sequence is PGPPPPPPLP…PLLSGPIELP (77 aa). One can recognise an FH2 domain in the interval 625–1025; sequence QKKLYKPDIP…SRRAKLAKEK (401 aa). Positions 999-1050 form a coiled coil; it reads FLEALKENHKRKEMEEKSRRAKLAKEKAEQEKLERQKKKKQLIDINKEGDET. Basic and acidic residues-rich tracts occupy residues 1007 to 1032 and 1075 to 1087; these read HKRK…EKLE and RNPD…LERS. Residues 1048–1078 form the DAD domain; it reads DETGVMDNLLEALQSGAAFRDRRKRIPRNPD.

It belongs to the formin homology family. Diaphanous subfamily. Interacts with MAPRE1 and APC.

Its function is as follows. May be involved in oogenesis. The polypeptide is Protein diaphanous homolog 2 (Diaph2) (Mus musculus (Mouse)).